The chain runs to 606 residues: Melanoma-associated antigen D2 (606 aa).

2 disordered regions span residues 1-29 (MSDT…MMQT) and 52-204 (SEDV…GGRR). An N-acetylserine modification is found at S2. The residue at position 5 (S5) is a Phosphoserine. T72 is subject to Phosphothreonine. A compositionally biased stretch (polar residues) spans 79 to 100 (PATQASSTTQLTDTQVLATENK). Basic and acidic residues predominate over residues 122 to 131 (ETKKVSHVAD). Over residues 142 to 164 (EAAPSQASADEPEPESAAAQSQE) the composition is skewed to low complexity. Residue S157 is modified to Phosphoserine. A compositionally biased stretch (basic residues) spans 171-181 (KVKAKKARKVK). S190, S191, S194, S197, S244, and S247 each carry phosphoserine. Residues 248-260 (PKARRGKARRRAA) show a composition bias toward basic residues. The disordered stretch occupies residues 248-275 (PKARRGKARRRAAKLQSSQEPEAPPPRD). Residues S264 and S265 each carry the phosphoserine modification. Positions 279–478 (LQGRANDLVK…KEWAAQYREA (200 aa)) constitute an MAGE domain. The segment at 534-563 (GAEAKAKAQESGSASTGASTSTNNSASASA) is disordered.

In terms of assembly, interacts with GNAS.

In terms of biological role, regulates the expression, localization to the plasma membrane and function of the sodium chloride cotransporters SLC12A1 and SLC12A3, two key components of salt reabsorption in the distal renal tubule. This chain is Melanoma-associated antigen D2 (MAGED2), found in Pongo abelii (Sumatran orangutan).